The primary structure comprises 176 residues: uncharacterized protein (176 aa).

This is an uncharacterized protein from Bacillus anthracis.